The chain runs to 231 residues: 5'-methylthioadenosine/S-adenosylhomocysteine nucleosidase (231 aa).

Catalysis depends on glutamate 12, which acts as the Proton acceptor. Substrate-binding positions include glycine 78, methionine 153, and 174 to 175; that span reads ME. Aspartate 198 functions as the Proton donor in the catalytic mechanism.

Belongs to the PNP/UDP phosphorylase family. MtnN subfamily.

It catalyses the reaction S-adenosyl-L-homocysteine + H2O = S-(5-deoxy-D-ribos-5-yl)-L-homocysteine + adenine. It carries out the reaction S-methyl-5'-thioadenosine + H2O = 5-(methylsulfanyl)-D-ribose + adenine. The enzyme catalyses 5'-deoxyadenosine + H2O = 5-deoxy-D-ribose + adenine. It participates in amino-acid biosynthesis; L-methionine biosynthesis via salvage pathway; S-methyl-5-thio-alpha-D-ribose 1-phosphate from S-methyl-5'-thioadenosine (hydrolase route): step 1/2. In terms of biological role, catalyzes the irreversible cleavage of the glycosidic bond in both 5'-methylthioadenosine (MTA) and S-adenosylhomocysteine (SAH/AdoHcy) to adenine and the corresponding thioribose, 5'-methylthioribose and S-ribosylhomocysteine, respectively. Also cleaves 5'-deoxyadenosine, a toxic by-product of radical S-adenosylmethionine (SAM) enzymes, into 5-deoxyribose and adenine. The polypeptide is 5'-methylthioadenosine/S-adenosylhomocysteine nucleosidase (Bacillus anthracis (strain A0248)).